A 185-amino-acid polypeptide reads, in one-letter code: ATP synthase subunit delta (185 aa).

Belongs to the ATPase delta chain family. F-type ATPases have 2 components, F(1) - the catalytic core - and F(0) - the membrane proton channel. F(1) has five subunits: alpha(3), beta(3), gamma(1), delta(1), epsilon(1). CF(0) has four main subunits: a(1), b(1), b'(1) and c(10-14). The alpha and beta chains form an alternating ring which encloses part of the gamma chain. F(1) is attached to F(0) by a central stalk formed by the gamma and epsilon chains, while a peripheral stalk is formed by the delta, b and b' chains.

Its subcellular location is the cellular thylakoid membrane. In terms of biological role, f(1)F(0) ATP synthase produces ATP from ADP in the presence of a proton or sodium gradient. F-type ATPases consist of two structural domains, F(1) containing the extramembraneous catalytic core and F(0) containing the membrane proton channel, linked together by a central stalk and a peripheral stalk. During catalysis, ATP synthesis in the catalytic domain of F(1) is coupled via a rotary mechanism of the central stalk subunits to proton translocation. This protein is part of the stalk that links CF(0) to CF(1). It either transmits conformational changes from CF(0) to CF(1) or is implicated in proton conduction. This chain is ATP synthase subunit delta, found in Cyanothece sp. (strain PCC 7425 / ATCC 29141).